The chain runs to 219 residues: Small ribosomal subunit protein uS3 (219 aa).

A KH type-2 domain is found at 38–106 (IREYINVRLK…RVHINILEVK (69 aa)).

Belongs to the universal ribosomal protein uS3 family. Part of the 30S ribosomal subunit. Forms a tight complex with proteins S10 and S14.

Its function is as follows. Binds the lower part of the 30S subunit head. Binds mRNA in the 70S ribosome, positioning it for translation. The chain is Small ribosomal subunit protein uS3 from Bacillus thuringiensis (strain Al Hakam).